Consider the following 139-residue polypeptide: MDIREIQAALPHRYPMLLVDRVLEVSDDHIVAIKNVTINEPFFNGHFPHYPVMPGVLIMEALAQTAGVLELSKEENKSKLVFYAGMDKVKFKKQVVPGDQLVMTATFIKRRGTIAVVEARAEVDGKLAASGTLTFACGQ.

Histidine 46 is a catalytic residue.

Belongs to the thioester dehydratase family. FabZ subfamily.

It is found in the cytoplasm. The enzyme catalyses a (3R)-hydroxyacyl-[ACP] = a (2E)-enoyl-[ACP] + H2O. Functionally, involved in unsaturated fatty acids biosynthesis. Catalyzes the dehydration of short chain beta-hydroxyacyl-ACPs and long chain saturated and unsaturated beta-hydroxyacyl-ACPs. In Streptococcus pyogenes serotype M3 (strain ATCC BAA-595 / MGAS315), this protein is 3-hydroxyacyl-[acyl-carrier-protein] dehydratase FabZ.